The primary structure comprises 557 residues: Urocanate hydratase (557 aa).

Residues 53 to 54 (GG), Q131, 177 to 179 (GMG), E197, 243 to 244 (NA), 264 to 268 (QTSAH), 274 to 275 (YL), and Y323 each bind NAD(+). C411 is an active-site residue. G493 serves as a coordination point for NAD(+).

This sequence belongs to the urocanase family. The cofactor is NAD(+).

Its subcellular location is the cytoplasm. It catalyses the reaction 4-imidazolone-5-propanoate = trans-urocanate + H2O. It participates in amino-acid degradation; L-histidine degradation into L-glutamate; N-formimidoyl-L-glutamate from L-histidine: step 2/3. Catalyzes the conversion of urocanate to 4-imidazolone-5-propionate. The sequence is that of Urocanate hydratase from Mesorhizobium japonicum (strain LMG 29417 / CECT 9101 / MAFF 303099) (Mesorhizobium loti (strain MAFF 303099)).